A 462-amino-acid chain; its full sequence is Myrosinase-binding protein 1 (462 aa).

The interval 1 to 23 (MSTGGPQKLEAQGGKEGKEWDDG) is disordered. Jacalin-type lectin domains lie at 6–148 (PQKL…YFAP), 157–300 (PNKV…YFAP), and 310–453 (TKKL…HIVP). Basic and acidic residues predominate over residues 13 to 23 (GGKEGKEWDDG).

Belongs to the jacalin lectin family. In terms of tissue distribution, expressed exclusively in flowers, in male and female organs, petals and pedicels. Not detected in pollen grains or sepals.

In Arabidopsis thaliana (Mouse-ear cress), this protein is Myrosinase-binding protein 1 (MBP1).